Consider the following 410-residue polypeptide: Adenosylhomocysteinase (410 aa).

Positions 117 and 142 each coordinate substrate. NAD(+) is bound at residue 143 to 145 (TTT). Residues Lys172 and Asp176 each contribute to the substrate site. NAD(+) contacts are provided by residues Asn177, 206-211 (GYGYCG), Glu229, 285-287 (AGH), and Asn332.

The protein belongs to the adenosylhomocysteinase family. Requires NAD(+) as cofactor.

The protein localises to the cytoplasm. It carries out the reaction S-adenosyl-L-homocysteine + H2O = L-homocysteine + adenosine. It functions in the pathway amino-acid biosynthesis; L-homocysteine biosynthesis; L-homocysteine from S-adenosyl-L-homocysteine: step 1/1. In terms of biological role, may play a key role in the regulation of the intracellular concentration of adenosylhomocysteine. This chain is Adenosylhomocysteinase, found in Thermoplasma acidophilum (strain ATCC 25905 / DSM 1728 / JCM 9062 / NBRC 15155 / AMRC-C165).